The primary structure comprises 230 residues: Phosducin-like protein 1 (230 aa).

The residue at position 1 (methionine 1) is an N-acetylmethionine. Residues 16–166 enclose the Phosducin domain; sequence AEKDKHTTVD…VVGYKNGLEK (151 aa). Positions 25-79 form a coiled coil; that stretch reads DSDDKSSGEENLDELLNELDRELDEDHEFLSAYRSERLQQISDHLKQVKKNVEDD. The segment at 81–230 is thioredoxin fold; it reads YGRLQCIDNE…RSESDSDLDI (150 aa).

It belongs to the phosducin family. In terms of assembly, interacts with the G protein beta-gamma subunit complex (STE4-STE18 complex).

Its subcellular location is the cytoplasm. Not essential for growth. Inhibits early G-protein signaling events following pheromone stimulation. May help create heterodimerizable beta-tubulin by facilitating the efficient transfer of nascent beta-tubulin polypeptides to the folding apparatus. This Saccharomyces cerevisiae (strain ATCC 204508 / S288c) (Baker's yeast) protein is Phosducin-like protein 1 (PLP1).